The following is a 283-amino-acid chain: 4-hydroxy-tetrahydrodipicolinate synthase (283 aa).

Thr-46 is a pyruvate binding site. Catalysis depends on Tyr-134, which acts as the Proton donor/acceptor. Lys-162 functions as the Schiff-base intermediate with substrate in the catalytic mechanism. Pyruvate is bound at residue Ile-208.

Belongs to the DapA family. As to quaternary structure, homotetramer; dimer of dimers.

The protein resides in the cytoplasm. The catalysed reaction is L-aspartate 4-semialdehyde + pyruvate = (2S,4S)-4-hydroxy-2,3,4,5-tetrahydrodipicolinate + H2O + H(+). The protein operates within amino-acid biosynthesis; L-lysine biosynthesis via DAP pathway; (S)-tetrahydrodipicolinate from L-aspartate: step 3/4. Its function is as follows. Catalyzes the condensation of (S)-aspartate-beta-semialdehyde [(S)-ASA] and pyruvate to 4-hydroxy-tetrahydrodipicolinate (HTPA). The polypeptide is 4-hydroxy-tetrahydrodipicolinate synthase (Methanothermobacter thermautotrophicus (strain ATCC 29096 / DSM 1053 / JCM 10044 / NBRC 100330 / Delta H) (Methanobacterium thermoautotrophicum)).